A 2342-amino-acid polypeptide reads, in one-letter code: Outer kinetochore KNL1 complex subunit KNL1 (2342 aa).

The interval Met1–Ser56 is disordered. The tract at residues Met1 to Thr250 is may mediate oligomerization. Residues Met1–Leu728 form an interaction with BUB1 and BUB1B region. 2 interaction with microtubules regions span residues Arg17–Leu34 and Lys53–Ser80. An interaction with PP1CA; contains the protein phosphatase 1 (PP1) interaction motifs SILK, RVXF and phi-phi region spans residues His23–Ser80. A Phosphoserine; by AURKB modification is found at Ser24. The residue at position 32 (Ser32) is a Phosphoserine. Position 60 is a phosphoserine; by AURKB (Ser60). The segment at Glu174–Gly190 is interaction with BUB1. An interaction with BUB1B region spans residues Ala210–Asn226. Thr539 is modified (phosphothreonine). Phosphoserine occurs at positions 578 and 584. Position 586 is a phosphothreonine (Thr586). A disordered region spans residues Ala620–Asn646. Positions Glu622–Ser633 are enriched in low complexity. Ser767 bears the Phosphoserine mark. A 2 X 104 AA approximate repeats region spans residues Glu855–Asp1201. The stretch at Asp885–Asp989 is repeat 1. Thr901 is modified (phosphothreonine). 4 positions are modified to phosphoserine: Ser956, Ser1039, Ser1076, and Ser1088. Repeat 2 spans residues Asp1099–Asp1201. The residue at position 1448 (Ser1448) is a Phosphoserine. Positions Ser1639–Pro1662 are disordered. Over residues Lys1642–Lys1651 the composition is skewed to basic and acidic residues. Ser1675 and Ser1773 each carry phosphoserine. The short motif at Thr1789–Ile1803 is the Nuclear localization signal element. At Ser1831 the chain carries Phosphoserine. A phosphoserine; by TTK mark is found at Ser1831 and Ser1834. Phosphoserine occurs at positions 1845 and 1860. The interval Lys1981 to Gln2108 is required for interaction with ZWINT. A coiled-coil region spans residues Val2024 to Ser2133. The interval Glu2091 to Thr2311 is interaction with NSL1, DSN1 and required for assembly into the outer kinetochore.

In terms of assembly, component of the KNL1 complex composed of KNL1 and ZWINT. Part of the ten-subunit outer kinetochore KMN network that includes the KNL1, MIS12 and NDC80 complexes; a bioriented kinetochore contains approximately 150 copies of the network. Interacts (via C-terminus) with the MIS12 complex subunits NSL1 (via C-terminus), PMF1 and DSN1; the interaction is direct. Interacts (via N-terminal region) with BUB1B (via BUB1 N-terminal domain); the interaction is direct and is required for cell cycle arrest upon activation of the mitotic spindle assembly checkpoint. Interacts (via N-terminal region) with BUB1 (via BUB1 N-terminal domain); the interaction is direct. Interacts with the protein phosphatase PP1 subunit PPP1CA; the interaction is direct and mutually exclusive with binding to microtubules. Interacts with the protein phosphatase PP1 subunit PPP1CC; the interaction is direct and mutually exclusive with binding to microtubules. Phosphorylation by AURKB negatively regulates its interaction with protein phosphatase 1 (PP1) subunit PPP1CA and with microtubules. Highly expressed in testis, where it is localized in germ cells, in particular in spermatocytes and in the pre-acrosome of round spermatids. Detected in the acrosome of ejaculated spermatozoa. Detected in adult thymus, bone marrow, colon, small intestine, appendix and placenta, and in fetal liver and thymus.

The protein resides in the nucleus. It is found in the chromosome. It localises to the centromere. The protein localises to the kinetochore. Its subcellular location is the cytoplasm. In terms of biological role, acts as a component of the outer kinetochore KNL1 complex that serves as a docking point for spindle assembly checkpoint components and mediates microtubule-kinetochore interactions. Kinetochores, consisting of a centromere-associated inner segment and a microtubule-contacting outer segment, play a crucial role in chromosome segregation by mediating the physical connection between centromeric DNA and spindle microtubules. The outer kinetochore is made up of the ten-subunit KMN network, comprising the MIS12, NDC80 and KNL1 complexes, and auxiliary microtubule-associated components; together they connect the outer kinetochore with the inner kinetochore, bind microtubules, and mediate interactions with mitotic checkpoint proteins that delay anaphase until chromosomes are bioriented on the spindle. Required for kinetochore binding by a distinct subset of kMAPs (kinetochore-bound microtubule-associated proteins) and motors. Acts in coordination with CENPK to recruit the NDC80 complex to the outer kinetochore. Can bind either to microtubules or to the protein phosphatase 1 (PP1) catalytic subunits PPP1CA and PPP1CC (via overlapping binding sites), it has higher affinity for PP1. Recruits MAD2L1 to the kinetochore and also directly links BUB1 and BUB1B to the kinetochore. In addition to orienting mitotic chromosomes, it is also essential for alignment of homologous chromosomes during meiotic metaphase I. In meiosis I, required to activate the spindle assembly checkpoint at unattached kinetochores to correct erroneous kinetochore-microtubule attachments. The sequence is that of Outer kinetochore KNL1 complex subunit KNL1 from Homo sapiens (Human).